The chain runs to 77 residues: Large ribosomal subunit protein uL24 (77 aa).

It belongs to the universal ribosomal protein uL24 family. Part of the 50S ribosomal subunit.

Its function is as follows. One of two assembly initiator proteins, it binds directly to the 5'-end of the 23S rRNA, where it nucleates assembly of the 50S subunit. Functionally, one of the proteins that surrounds the polypeptide exit tunnel on the outside of the subunit. The polypeptide is Large ribosomal subunit protein uL24 (Campylobacter jejuni subsp. jejuni serotype O:6 (strain 81116 / NCTC 11828)).